We begin with the raw amino-acid sequence, 151 residues long: Protein NrdI (151 aa).

This sequence belongs to the NrdI family.

Functionally, probably involved in ribonucleotide reductase function. The chain is Protein NrdI from Mesoplasma florum (strain ATCC 33453 / NBRC 100688 / NCTC 11704 / L1) (Acholeplasma florum).